A 214-amino-acid polypeptide reads, in one-letter code: Redox-sensing transcriptional repressor Rex (214 aa).

The segment at residues 16 to 55 is a DNA-binding region (H-T-H motif); sequence LYYRYLIFLNDEGKEKVSSTELAEAVQVDSASIRRDFSYF. 90–95 lines the NAD(+) pocket; that stretch reads GVGNMG.

This sequence belongs to the transcriptional regulatory Rex family. As to quaternary structure, homodimer.

Its subcellular location is the cytoplasm. Functionally, modulates transcription in response to changes in cellular NADH/NAD(+) redox state. This Lactobacillus gasseri (strain ATCC 33323 / DSM 20243 / BCRC 14619 / CIP 102991 / JCM 1131 / KCTC 3163 / NCIMB 11718 / NCTC 13722 / AM63) protein is Redox-sensing transcriptional repressor Rex.